The chain runs to 161 residues: Disulfide bond formation protein B (161 aa).

The Cytoplasmic segment spans residues 1 to 8 (MQANSRAY). A helical transmembrane segment spans residues 9-25 (FLLIAFISFGLVGFALY). Residues 26-43 (LQFEKGYQPCPLCIMQRF) are Periplasmic-facing. Cys35 and Cys38 are oxidised to a cystine. The helical transmembrane segment at 44-58 (AFIGIGLFSLLAVIA) threads the bilayer. At 59 to 63 (QNTRS) the chain is on the cytoplasmic side. The chain crosses the membrane as a helical span at residues 64–81 (LWQGLGMLSGVGGIAVAV). Topologically, residues 82-136 (YHVSLLLNPKASCGIDPLENWVNALPTAKVLPQVFYSDGLCTAPLPPVLGLSVPA) are periplasmic. Cys94 and Cys122 are joined by a disulfide. The chain crosses the membrane as a helical span at residues 137–155 (WSLIWLFILTLTLAVGLIR). The Cytoplasmic segment spans residues 156–161 (REKNFR).

The protein belongs to the DsbB family.

It localises to the cell inner membrane. In terms of biological role, required for disulfide bond formation in some periplasmic proteins. Acts by oxidizing the DsbA protein. The chain is Disulfide bond formation protein B from Cupriavidus pinatubonensis (strain JMP 134 / LMG 1197) (Cupriavidus necator (strain JMP 134)).